Consider the following 664-residue polypeptide: Sulfoquinovosidase (664 aa).

Positions 135, 270, 283, 284, and 286 each coordinate 3-(6-sulfo-alpha-D-quinovosyl)glycerol. The Nucleophile role is filled by D388. E391 is a catalytic residue. R438 contributes to the 3-(6-sulfo-alpha-D-quinovosyl)glycerol binding site. Catalysis depends on D455, which acts as the Proton donor. H520 serves as a coordination point for 3-(6-sulfo-alpha-D-quinovosyl)glycerol.

This sequence belongs to the glycosyl hydrolase 31 family.

It catalyses the reaction 3-(6-sulfo-alpha-D-quinovosyl)glycerol + H2O = 6-sulfo-alpha-D-quinovose + glycerol. In terms of biological role, part of the sulfoquinovose monooxygenase (sulfo-SMO) pathway, a D-sulfoquinovose degradation pathway that enables the complete utilization of all carbons within sulfoquinovose (SQ) with concomitant production of inorganic sulfite. Catalyzes the first step of the pathway, the hydrolysis of sulfoquinovosyl glycerol (SQGro) to release sulfoquinovose (SQ). Hydrolyzes both epimers of SQGro, with a preference for the natural 2'R isomer. In vitro, can use the substrate analog para-nitrophenyl alpha-sulfoquinovoside (PNPSQ), but shows no detectable activity toward 4-nitrophenyl alpha-D-glucopyranoside (PNPGlc). In Agrobacterium fabrum (strain C58 / ATCC 33970) (Agrobacterium tumefaciens (strain C58)), this protein is Sulfoquinovosidase.